A 184-amino-acid chain; its full sequence is Photosystem I assembly protein Ycf4 (184 aa).

2 consecutive transmembrane segments (helical) span residues 19–39 and 64–84; these read ISNF…VLVG and LVMS…WCTI.

Belongs to the Ycf4 family.

The protein localises to the plastid. It is found in the chloroplast thylakoid membrane. In terms of biological role, seems to be required for the assembly of the photosystem I complex. The polypeptide is Photosystem I assembly protein Ycf4 (Oenothera elata subsp. hookeri (Hooker's evening primrose)).